Here is a 636-residue protein sequence, read N- to C-terminus: Biosynthetic arginine decarboxylase (636 aa).

Lys-101 is modified (N6-(pyridoxal phosphate)lysine). 286–296 (FDVGGGLAVDY) is a binding site for substrate.

The protein belongs to the Orn/Lys/Arg decarboxylase class-II family. SpeA subfamily. Requires Mg(2+) as cofactor. Pyridoxal 5'-phosphate serves as cofactor.

The enzyme catalyses L-arginine + H(+) = agmatine + CO2. It functions in the pathway amine and polyamine biosynthesis; agmatine biosynthesis; agmatine from L-arginine: step 1/1. Functionally, catalyzes the biosynthesis of agmatine from arginine. This Shewanella denitrificans (strain OS217 / ATCC BAA-1090 / DSM 15013) protein is Biosynthetic arginine decarboxylase.